We begin with the raw amino-acid sequence, 351 residues long: MRAEIVKDRVLVEKKAINEFYNNGYYGRPKSSGLELTLIEAVYLAFRGKIEVEHEGKVLEFSDLFKEASILQPSFELKYIVYKDLRERGFYVQPGVTDFRVYPRGSHPGKGAAKQFIYVRSERAPMPLRDLLRSLAAAENVRKQMVLAIVDEESDITFYDVKRPRLKGEMKEPLYPDINADATFLEDRVVVWDEEASKTLFENGFYGKPLDSQRLQLSLVESRYLLEKGVLNINNRQDESMDVDAFSKMASEIEPEFNLKSSVYTDLRDKGVVPKTGFKFGSHFRVYSQVESPTKIPHSEYLIHSIPMDHEFTLPVMSRAIRLANSVRKRMLYAILTDDGVDYIDIGRLKM.

Active-site residues include tyrosine 287, histidine 298, and lysine 329.

Belongs to the tRNA-intron endonuclease family. Archaeal long subfamily. Homodimer.

It catalyses the reaction pretRNA = a 3'-half-tRNA molecule with a 5'-OH end + a 5'-half-tRNA molecule with a 2',3'-cyclic phosphate end + an intron with a 2',3'-cyclic phosphate and a 5'-hydroxyl terminus.. Its function is as follows. Endonuclease that removes tRNA introns. Cleaves pre-tRNA at the 5'- and 3'-splice sites to release the intron. The products are an intron and two tRNA half-molecules bearing 2',3' cyclic phosphate and 5'-OH termini. Recognizes a pseudosymmetric substrate in which 2 bulged loops of 3 bases are separated by a stem of 4 bp. The polypeptide is tRNA-splicing endonuclease (Methanococcoides burtonii (strain DSM 6242 / NBRC 107633 / OCM 468 / ACE-M)).